Consider the following 302-residue polypeptide: Zinc transporter ZIP1 (302 aa).

The Extracellular portion of the chain corresponds to 1-6; the sequence is MDYLLQ. Residues 7 to 27 traverse the membrane as a helical segment; sequence VKVGALVGLLLLTLFFGFIPA. At 28–44 the chain is on the cytoplasmic side; sequence RMKWFHVTGGTELHKAV. A helical membrane pass occupies residues 45-65; that stretch reads LSFVSCFAGGVFLSACLLDII. The Extracellular segment spans residues 66-86; sequence PDYLSDIHGELQKRDLDDGFP. The chain crosses the membrane as a helical span at residues 87-107; it reads LPEFIMACGFFTVLILEKMVL. Topologically, residues 108-158 are cytoplasmic; the sequence is SCTEGHRNEETAPLLAPAAPNGHAHGHPSVNDLEGSGHHVHVDFHAHSSFR. A helical transmembrane segment spans residues 159–179; sequence SFMLFLSLSLHSVFEGLAIGL. Over 180–185 the chain is Extracellular; sequence QTTNAK. Residues 186 to 206 form a helical membrane-spanning segment; that stretch reads VLEICIAILVHKSIIVFSLSV. Topologically, residues 207–219 are cytoplasmic; that stretch reads KLVQSAVKPLWVV. Residues 220 to 240 form a helical membrane-spanning segment; it reads LYVTVFAIMSPLGIGIGIVVI. Residues 241-247 lie on the Extracellular side of the membrane; that stretch reads ETERQAG. A helical transmembrane segment spans residues 248–268; that stretch reads GLIQAVLEGLAAGTFIYITFL. The Cytoplasmic portion of the chain corresponds to 269 to 281; sequence EILPHELNSSERP. A helical membrane pass occupies residues 282-302; sequence LLKVLFLLCGFSIMAALCFLG.

Belongs to the ZIP transporter (TC 2.A.5) family. As to expression, ubiquitous. Highest levels in ovary, high levels in heart, eye, kidney and brain, moderate levels in intestine and low levels in gill and skin.

The protein localises to the cell membrane. Its subcellular location is the endoplasmic reticulum membrane. It catalyses the reaction Zn(2+)(in) = Zn(2+)(out). In terms of biological role, transporter for the divalent cation Zn(2+). Mediates the influx of Zn(2+) into cells from extracellular space. The chain is Zinc transporter ZIP1 (slc39a1) from Danio rerio (Zebrafish).